We begin with the raw amino-acid sequence, 282 residues long: MEKIFLNGEFVSPSEAKVSYNDRGYVFGDGIYEYIRVYNGKLFTVTEHYERFLRSANEIGLDLNYSVEELIELSRKLVDMNQIETGAIYIQATRGVAERNHSFPTPEVEPAIVAYTKSYDRPYDHLENGVNGVTVEDIRWLRCDIKSLNLLGNVLAKEYAVKYNAVEAIQHRGETVTEGSSSNAYAIKDGVIYTHPINNYILNGITRIVIKKIAEDYNIPFKEETFTVDFLRNADEVIVSSTSAEVTPVIKLDGEPVNDGKVGPITRQLQEGFEKYIESHSI.

Residue tyrosine 32 coordinates substrate. Residue arginine 51 coordinates pyridoxal 5'-phosphate. Positions 99 and 101 each coordinate substrate. Lysine 146 serves as the catalytic Proton acceptor. Lysine 146 is modified (N6-(pyridoxal phosphate)lysine). Glutamate 178 serves as a coordination point for pyridoxal 5'-phosphate.

Belongs to the class-IV pyridoxal-phosphate-dependent aminotransferase family. Homodimer. The cofactor is pyridoxal 5'-phosphate.

It carries out the reaction D-alanine + 2-oxoglutarate = D-glutamate + pyruvate. In terms of biological role, acts on the D-isomers of alanine, leucine, aspartate, glutamate, aminobutyrate, norvaline and asparagine. The enzyme transfers an amino group from a substrate D-amino acid to the pyridoxal phosphate cofactor to form pyridoxamine and an alpha-keto acid in the first half-reaction. The second half-reaction is the reverse of the first, transferring the amino group from the pyridoxamine to a second alpha-keto acid to form the product D-amino acid via a ping-pong mechanism. This is an important process in the formation of D-alanine and D-glutamate, which are essential bacterial cell wall components. The protein is D-alanine aminotransferase (dat) of Staphylococcus aureus (strain MW2).